The sequence spans 282 residues: Shikimate dehydrogenase (NADP(+)) (282 aa).

Residues 15-17 and Thr62 each bind shikimate; that span reads SKS. The active-site Proton acceptor is Lys66. 2 residues coordinate shikimate: Asn87 and Asp103. Residues 128–132, 152–157, and Met216 each bind NADP(+); these read GAGGA and NRTPAK. Residue Tyr218 participates in shikimate binding. An NADP(+)-binding site is contributed by Gly240.

This sequence belongs to the shikimate dehydrogenase family. As to quaternary structure, homodimer.

It carries out the reaction shikimate + NADP(+) = 3-dehydroshikimate + NADPH + H(+). It participates in metabolic intermediate biosynthesis; chorismate biosynthesis; chorismate from D-erythrose 4-phosphate and phosphoenolpyruvate: step 4/7. Its function is as follows. Involved in the biosynthesis of the chorismate, which leads to the biosynthesis of aromatic amino acids. Catalyzes the reversible NADPH linked reduction of 3-dehydroshikimate (DHSA) to yield shikimate (SA). In Nitrosococcus oceani (strain ATCC 19707 / BCRC 17464 / JCM 30415 / NCIMB 11848 / C-107), this protein is Shikimate dehydrogenase (NADP(+)).